Consider the following 305-residue polypeptide: UDP-3-O-acyl-N-acetylglucosamine deacetylase (305 aa).

Residues H78, H237, and D241 each contribute to the Zn(2+) site. Catalysis depends on H264, which acts as the Proton donor.

It belongs to the LpxC family. Requires Zn(2+) as cofactor.

The catalysed reaction is a UDP-3-O-[(3R)-3-hydroxyacyl]-N-acetyl-alpha-D-glucosamine + H2O = a UDP-3-O-[(3R)-3-hydroxyacyl]-alpha-D-glucosamine + acetate. It participates in glycolipid biosynthesis; lipid IV(A) biosynthesis; lipid IV(A) from (3R)-3-hydroxytetradecanoyl-[acyl-carrier-protein] and UDP-N-acetyl-alpha-D-glucosamine: step 2/6. Catalyzes the hydrolysis of UDP-3-O-myristoyl-N-acetylglucosamine to form UDP-3-O-myristoylglucosamine and acetate, the committed step in lipid A biosynthesis. The polypeptide is UDP-3-O-acyl-N-acetylglucosamine deacetylase (Cupriavidus taiwanensis (strain DSM 17343 / BCRC 17206 / CCUG 44338 / CIP 107171 / LMG 19424 / R1) (Ralstonia taiwanensis (strain LMG 19424))).